The chain runs to 265 residues: Mlc titration factor A (265 aa).

Residues His111, His148, His152, and Glu211 each coordinate Zn(2+).

This sequence belongs to the MtfA family. In terms of assembly, interacts with Mlc. Requires Zn(2+) as cofactor.

The protein resides in the cytoplasm. Involved in the modulation of the activity of the glucose-phosphotransferase system (glucose-PTS). Interacts with the transcriptional repressor Mlc, preventing its interaction with DNA and leading to the modulation of expression of genes regulated by Mlc, including ptsG, which encodes the PTS system glucose-specific EIICB component. Functionally, shows zinc-dependent metallopeptidase activity. The polypeptide is Mlc titration factor A (Escherichia coli (strain ATCC 8739 / DSM 1576 / NBRC 3972 / NCIMB 8545 / WDCM 00012 / Crooks)).